Consider the following 194-residue polypeptide: Peptidyl-tRNA hydrolase (194 aa).

Residue Tyr-17 coordinates tRNA. His-22 (proton acceptor) is an active-site residue. Phe-68, Asn-70, and Asn-116 together coordinate tRNA.

The protein belongs to the PTH family. Monomer.

The protein localises to the cytoplasm. It carries out the reaction an N-acyl-L-alpha-aminoacyl-tRNA + H2O = an N-acyl-L-amino acid + a tRNA + H(+). Functionally, hydrolyzes ribosome-free peptidyl-tRNAs (with 1 or more amino acids incorporated), which drop off the ribosome during protein synthesis, or as a result of ribosome stalling. In terms of biological role, catalyzes the release of premature peptidyl moieties from peptidyl-tRNA molecules trapped in stalled 50S ribosomal subunits, and thus maintains levels of free tRNAs and 50S ribosomes. The chain is Peptidyl-tRNA hydrolase from Actinobacillus pleuropneumoniae serotype 7 (strain AP76).